The sequence spans 78 residues: Structural DNA-binding protein p10 (78 aa).

The span at 1–27 (MPTKAGTKSTANKKTTKGSSKSGSSRG) shows a compositional bias: low complexity. Residues 1–41 (MPTKAGTKSTANKKTTKGSSKSGSSRGHTGKTHASSSMHSG) form a disordered region.

This sequence belongs to the asfivirus P10 family.

It is found in the virion. Functionally, may play a role in genome packaging through direct interaction with viral DNA. Binds to ssDNA and dsDNA with the same apparent affinity in vitro. This chain is Structural DNA-binding protein p10, found in African swine fever virus (strain Badajoz 1971 Vero-adapted) (Ba71V).